The chain runs to 492 residues: Probable sphingolipid transporter spinster homolog 1 (492 aa).

A helical transmembrane segment spans residues 29–49 (FVTILCIINLINYVDRGVIAS). 2 N-linked (GlcNAc...) asparagine glycosylation sites follow: asparagine 53 and asparagine 76. A run of 7 helical transmembrane segments spans residues 83 to 103 (GLLS…FAGL), 119 to 139 (VWTI…IAVF), 141 to 161 (MFVG…IDDS), 169 to 189 (FWLG…YVFG), 200 to 220 (WAFY…FCIK), 279 to 299 (VFIV…AYSY), and 317 to 337 (IFGG…SYVL). A glycan (N-linked (GlcNAc...) asparagine) is linked at asparagine 341. 4 consecutive transmembrane segments (helical) span residues 348–368 (FKLL…AFLM), 372–392 (YAFI…QAPV), 407–427 (LSMA…SSPL), and 442–462 (TLII…GIFM). Serine 472 carries the phosphoserine modification. The segment covering 472-481 (SEDDEVEEDK) has biased composition (acidic residues). The interval 472-492 (SEDDEVEEDKLESKTENSTLA) is disordered. Asparagine 488 carries N-linked (GlcNAc...) asparagine glycosylation.

Belongs to the major facilitator superfamily. Spinster (TC 2.A.1.49) family.

The protein resides in the late endosome membrane. It localises to the lysosome membrane. Probable sphingolipid transporter that plays a central role in endosomes and/or lysosomes storage. This chain is Probable sphingolipid transporter spinster homolog 1, found in Arabidopsis thaliana (Mouse-ear cress).